A 271-amino-acid polypeptide reads, in one-letter code: uncharacterized protein (271 aa).

3 helical membrane passes run 11-33, 172-194, and 214-236; these read GWLA…LAPW, SINT…LQLI, and FLSY…GYFA. The interval 245–271 is disordered; it reads REKAGSPPPDKPMTVEQKLADRYGRRR. The segment covering 262–271 has biased composition (basic and acidic residues); the sequence is KLADRYGRRR.

Belongs to the SURF1 family.

The protein localises to the cell membrane. This is an uncharacterized protein from Mycobacterium tuberculosis (strain CDC 1551 / Oshkosh).